The following is a 194-amino-acid chain: Ras-related protein Rab-22A (194 aa).

Residue 12–20 participates in GTP binding; the sequence is GDTGVGKSS. The short motif at 34–42 is the Effector region element; that stretch reads INPTIGASF. Residues 60–64, 118–121, and 148–150 contribute to the GTP site; these read DTAGQ, NKCD, and SAK. Residues 174 to 194 are disordered; sequence PSGGKGFKLRRQPSEPKRSCC. Positions 185–194 are enriched in basic and acidic residues; sequence QPSEPKRSCC. 2 S-geranylgeranyl cysteine lipidation sites follow: C193 and C194.

The protein belongs to the small GTPase superfamily. Rab family. Interacts directly with ZFYVE20. Binds EEA1. Interacts (in its GTP-bound form) with RABGEF1. Interacts (in its GTP-bound form) with RINL.

Its subcellular location is the endosome membrane. It localises to the cell membrane. The protein resides in the early endosome. The protein localises to the late endosome. It is found in the cell projection. Its subcellular location is the ruffle. It localises to the cytoplasmic vesicle. The protein resides in the phagosome. The protein localises to the phagosome membrane. Plays a role in endocytosis and intracellular protein transport. Mediates trafficking of TF from early endosomes to recycling endosomes. Required for NGF-mediated endocytosis of NTRK1, and subsequent neurite outgrowth. Binds GTP and GDP and has low GTPase activity. Alternates between a GTP-bound active form and a GDP-bound inactive form. The polypeptide is Ras-related protein Rab-22A (RAB22A) (Homo sapiens (Human)).